The primary structure comprises 327 residues: Phenylalanine--tRNA ligase alpha subunit (327 aa).

Glu252 contacts Mg(2+).

The protein belongs to the class-II aminoacyl-tRNA synthetase family. Phe-tRNA synthetase alpha subunit type 1 subfamily. As to quaternary structure, tetramer of two alpha and two beta subunits. Requires Mg(2+) as cofactor.

The protein resides in the cytoplasm. It carries out the reaction tRNA(Phe) + L-phenylalanine + ATP = L-phenylalanyl-tRNA(Phe) + AMP + diphosphate + H(+). The chain is Phenylalanine--tRNA ligase alpha subunit from Shewanella sp. (strain MR-7).